We begin with the raw amino-acid sequence, 126 residues long: UPF0102 protein BCAN_A0183 (126 aa).

This sequence belongs to the UPF0102 family.

This is UPF0102 protein BCAN_A0183 from Brucella canis (strain ATCC 23365 / NCTC 10854 / RM-666).